The following is a 381-amino-acid chain: Subtilisin amylosacchariticus (381 aa).

Positions 1-29 (MRSKKLWISLLFALTLIFTMAFSNMSAQA) are cleaved as a signal peptide. The propeptide occupies 30 to 106 (AGKSSTEKKY…VEEDHIAHEY (77 aa)). The Inhibitor I9 domain occupies 38–103 (KYIVGFKQTM…VAYVEEDHIA (66 aa)). Q108 is a binding site for Ca(2+). The Peptidase S8 domain maps to 111-380 (PYGISQIKAP…KGLINVQAAA (270 aa)). The active-site Charge relay system is D138. D147 contacts Ca(2+). The active-site Charge relay system is H170. Residues L181, N183, I185, V187, A275, Y277, and T280 each contribute to the Ca(2+) site. The active-site Charge relay system is S327.

The protein belongs to the peptidase S8 family. Ca(2+) is required as a cofactor.

The protein localises to the secreted. It carries out the reaction Hydrolysis of proteins with broad specificity for peptide bonds, and a preference for a large uncharged residue in P1. Hydrolyzes peptide amides.. Functionally, subtilisin is an extracellular alkaline serine protease, it catalyzes the hydrolysis of proteins and peptide amides. In Bacillus subtilis subsp. amylosacchariticus, this protein is Subtilisin amylosacchariticus (apr).